Here is a 466-residue protein sequence, read N- to C-terminus: Cysteine--tRNA ligase (466 aa).

Position 28 (Cys28) interacts with Zn(2+). Positions 30–40 match the 'HIGH' region motif; that stretch reads PTVYNFFHIGN. Positions 208, 233, and 237 each coordinate Zn(2+). The 'KMSKS' region signature appears at 265-269; sequence KMSKS. ATP is bound at residue Lys268.

The protein belongs to the class-I aminoacyl-tRNA synthetase family. Monomer. Zn(2+) serves as cofactor.

Its subcellular location is the cytoplasm. It carries out the reaction tRNA(Cys) + L-cysteine + ATP = L-cysteinyl-tRNA(Cys) + AMP + diphosphate. The chain is Cysteine--tRNA ligase from Clostridium perfringens (strain 13 / Type A).